A 305-amino-acid chain; its full sequence is UDP-3-O-acyl-N-acetylglucosamine deacetylase (305 aa).

3 residues coordinate Zn(2+): His-79, His-238, and Asp-242. The active-site Proton donor is His-265.

Belongs to the LpxC family. It depends on Zn(2+) as a cofactor.

The catalysed reaction is a UDP-3-O-[(3R)-3-hydroxyacyl]-N-acetyl-alpha-D-glucosamine + H2O = a UDP-3-O-[(3R)-3-hydroxyacyl]-alpha-D-glucosamine + acetate. The protein operates within glycolipid biosynthesis; lipid IV(A) biosynthesis; lipid IV(A) from (3R)-3-hydroxytetradecanoyl-[acyl-carrier-protein] and UDP-N-acetyl-alpha-D-glucosamine: step 2/6. Functionally, catalyzes the hydrolysis of UDP-3-O-myristoyl-N-acetylglucosamine to form UDP-3-O-myristoylglucosamine and acetate, the committed step in lipid A biosynthesis. This is UDP-3-O-acyl-N-acetylglucosamine deacetylase from Klebsiella pneumoniae subsp. pneumoniae (strain ATCC 700721 / MGH 78578).